We begin with the raw amino-acid sequence, 437 residues long: GTPase Obg (437 aa).

The Obg domain occupies 2–160 (SMFLDTAKVS…RQLELELKIL (159 aa)). An OBG-type G domain is found at 161–338 (ADVGLVGFPS…LLEATAELLA (178 aa)). GTP-binding positions include 167–174 (GFPSVGKS), 192–196 (FTTIV), 214–217 (DLPG), 284–287 (NKMD), and 319–321 (SSL). Mg(2+)-binding residues include S174 and T194. The 79-residue stretch at 359–437 (GFAAEEKAFE…IGKFEFEFVD (79 aa)) folds into the OCT domain.

This sequence belongs to the TRAFAC class OBG-HflX-like GTPase superfamily. OBG GTPase family. As to quaternary structure, monomer. Mg(2+) serves as cofactor.

It localises to the cytoplasm. Functionally, an essential GTPase which binds GTP, GDP and possibly (p)ppGpp with moderate affinity, with high nucleotide exchange rates and a fairly low GTP hydrolysis rate. Plays a role in control of the cell cycle, stress response, ribosome biogenesis and in those bacteria that undergo differentiation, in morphogenesis control. The chain is GTPase Obg from Streptococcus equi subsp. equi (strain 4047).